Reading from the N-terminus, the 288-residue chain is Elongation factor Ts (288 aa).

The interval 82–85 (TDFV) is involved in Mg(2+) ion dislocation from EF-Tu.

Belongs to the EF-Ts family.

The protein resides in the cytoplasm. Its function is as follows. Associates with the EF-Tu.GDP complex and induces the exchange of GDP to GTP. It remains bound to the aminoacyl-tRNA.EF-Tu.GTP complex up to the GTP hydrolysis stage on the ribosome. This is Elongation factor Ts from Chlorobaculum tepidum (strain ATCC 49652 / DSM 12025 / NBRC 103806 / TLS) (Chlorobium tepidum).